Here is a 364-residue protein sequence, read N- to C-terminus: Protein-glutamate methylesterase/protein-glutamine glutaminase (364 aa).

The 119-residue stretch at 5 to 123 folds into the Response regulatory domain; sequence RVLVVDDTIL…PAANKAALAN (119 aa). Aspartate 56 is modified (4-aspartylphosphate). A CheB-type methylesterase domain is found at 174–364; that stretch reads EIVVIGISTG…QEIVHTVKLY (191 aa). Catalysis depends on residues serine 181, histidine 208, and aspartate 306.

This sequence belongs to the CheB family. In terms of processing, phosphorylated by CheA. Phosphorylation of the N-terminal regulatory domain activates the methylesterase activity.

The protein localises to the cytoplasm. It carries out the reaction [protein]-L-glutamate 5-O-methyl ester + H2O = L-glutamyl-[protein] + methanol + H(+). It catalyses the reaction L-glutaminyl-[protein] + H2O = L-glutamyl-[protein] + NH4(+). Its function is as follows. Involved in chemotaxis. Part of a chemotaxis signal transduction system that modulates chemotaxis in response to various stimuli. Catalyzes the demethylation of specific methylglutamate residues introduced into the chemoreceptors (methyl-accepting chemotaxis proteins or MCP) by CheR. Also mediates the irreversible deamidation of specific glutamine residues to glutamic acid. This chain is Protein-glutamate methylesterase/protein-glutamine glutaminase, found in Desulfotalea psychrophila (strain LSv54 / DSM 12343).